The following is a 427-amino-acid chain: GTPase ERA-like, chloroplastic (427 aa).

A chloroplast-targeting transit peptide spans 1-39; sequence MAVSPHISPTLSRYKFFSTSVVENPNFSPYRIYSRRRVT. The Era-type G domain maps to 128–298; sequence RSGYVAVVGM…KEWILSKLPF (171 aa). Residues 136 to 143 form a G1 region; the sequence is GMPNVGKS. 136–143 contributes to the GTP binding site; the sequence is GMPNVGKS. Positions 162–166 are G2; that stretch reads QTTRH. Residues 183–186 are G3; the sequence is DTPG. GTP-binding positions include 183 to 187 and 248 to 251; these read DTPGV and NKKD. Positions 248 to 251 are G4; sequence NKKD. The interval 277–279 is G5; it reads VSA. One can recognise a KH type-2 domain in the interval 329 to 406; sequence YRNEVPYACQ…FLEVEVKVKE (78 aa).

It belongs to the TRAFAC class TrmE-Era-EngA-EngB-Septin-like GTPase superfamily. Era GTPase family.

Its subcellular location is the plastid. It is found in the chloroplast stroma. It localises to the chloroplast nucleoid. Functionally, nuclear genome-encoded probable GTPase involved in ribosome biogenesis in chloroplasts. Plays a role in 16S rRNA maturation in plastids and may contribute to the assembly of the small (30S) ribosomal subunit. In Arabidopsis thaliana (Mouse-ear cress), this protein is GTPase ERA-like, chloroplastic.